The chain runs to 466 residues: Ribulose bisphosphate carboxylase large chain (466 aa).

An N6,N6,N6-trimethyllysine modification is found at Lys5. Residues Asn114 and Thr164 each contribute to the substrate site. Lys166 acts as the Proton acceptor in catalysis. A substrate-binding site is contributed by Lys168. Residues Lys192, Asp194, and Glu195 each coordinate Mg(2+). N6-carboxylysine is present on Lys192. His285 serves as the catalytic Proton acceptor. 3 residues coordinate substrate: Arg286, His318, and Ser370.

The protein belongs to the RuBisCO large chain family. Type I subfamily. In terms of assembly, heterohexadecamer of 8 large chains and 8 small chains; disulfide-linked. The disulfide link is formed within the large subunit homodimers. The cofactor is Mg(2+). Post-translationally, the disulfide bond which can form in the large chain dimeric partners within the hexadecamer appears to be associated with oxidative stress and protein turnover.

It localises to the plastid. It is found in the chloroplast. It catalyses the reaction 2 (2R)-3-phosphoglycerate + 2 H(+) = D-ribulose 1,5-bisphosphate + CO2 + H2O. It carries out the reaction D-ribulose 1,5-bisphosphate + O2 = 2-phosphoglycolate + (2R)-3-phosphoglycerate + 2 H(+). Functionally, ruBisCO catalyzes two reactions: the carboxylation of D-ribulose 1,5-bisphosphate, the primary event in carbon dioxide fixation, as well as the oxidative fragmentation of the pentose substrate in the photorespiration process. Both reactions occur simultaneously and in competition at the same active site. This Poliothyrsis sinensis (Chinese pearlbloom tree) protein is Ribulose bisphosphate carboxylase large chain.